The following is a 511-amino-acid chain: Bifunctional purine biosynthesis protein PurH (511 aa).

In terms of domain architecture, MGS-like spans 1–145; the sequence is MKKRALVSVS…KNHKFVSVIV (145 aa).

It belongs to the PurH family.

The enzyme catalyses (6R)-10-formyltetrahydrofolate + 5-amino-1-(5-phospho-beta-D-ribosyl)imidazole-4-carboxamide = 5-formamido-1-(5-phospho-D-ribosyl)imidazole-4-carboxamide + (6S)-5,6,7,8-tetrahydrofolate. It carries out the reaction IMP + H2O = 5-formamido-1-(5-phospho-D-ribosyl)imidazole-4-carboxamide. It functions in the pathway purine metabolism; IMP biosynthesis via de novo pathway; 5-formamido-1-(5-phospho-D-ribosyl)imidazole-4-carboxamide from 5-amino-1-(5-phospho-D-ribosyl)imidazole-4-carboxamide (10-formyl THF route): step 1/1. Its pathway is purine metabolism; IMP biosynthesis via de novo pathway; IMP from 5-formamido-1-(5-phospho-D-ribosyl)imidazole-4-carboxamide: step 1/1. In Bacillus mycoides (strain KBAB4) (Bacillus weihenstephanensis), this protein is Bifunctional purine biosynthesis protein PurH.